A 144-amino-acid polypeptide reads, in one-letter code: Crossover junction endodeoxyribonuclease Hjc (144 aa).

A Mg(2+)-binding site is contributed by glutamate 12. Serine 32 is a catalytic residue. Aspartate 42 and glutamate 55 together coordinate Mg(2+).

The protein belongs to the Holliday junction resolvase Hjc family. Homodimer; forms a 2:1 complex with Hel308 (Hjm). May form a complex with Holliday junction DNA, Hjc and Hjm. Mg(2+) is required as a cofactor.

The catalysed reaction is Endonucleolytic cleavage at a junction such as a reciprocal single-stranded crossover between two homologous DNA duplexes (Holliday junction).. With respect to regulation, cleavage stimulated by PCNA123 and PCNA323 and by RadC2. Functionally, a structure-specific endonuclease that resolves Holliday junction (HJ) intermediates during genetic recombination. Cleaves 4-way DNA junctions introducing paired nicks in opposing strands, leaving a 5'-terminal phosphate and a 3'-terminal hydroxyl group that are subsequently ligated to produce recombinant products. Inhibits the helicase activity of Hel308 (Hjm). The protein is Crossover junction endodeoxyribonuclease Hjc of Sulfurisphaera tokodaii (strain DSM 16993 / JCM 10545 / NBRC 100140 / 7) (Sulfolobus tokodaii).